The sequence spans 488 residues: Lysine--tRNA ligase (488 aa).

Residues E397 and E404 each coordinate Mg(2+).

The protein belongs to the class-II aminoacyl-tRNA synthetase family. As to quaternary structure, homodimer. The cofactor is Mg(2+).

Its subcellular location is the cytoplasm. It carries out the reaction tRNA(Lys) + L-lysine + ATP = L-lysyl-tRNA(Lys) + AMP + diphosphate. This chain is Lysine--tRNA ligase (lysS), found in Mycoplasmopsis fermentans (strain ATCC 19989 / NBRC 14854 / NCTC 10117 / PG18) (Mycoplasma fermentans).